The chain runs to 138 residues: Large ribosomal subunit protein uL16 (138 aa).

The segment covering 1–17 has biased composition (basic residues); sequence MLIPRKVKHRKQHHPRQ. The interval 1 to 22 is disordered; the sequence is MLIPRKVKHRKQHHPRQRGIAS.

Belongs to the universal ribosomal protein uL16 family. In terms of assembly, part of the 50S ribosomal subunit.

Binds 23S rRNA and is also seen to make contacts with the A and possibly P site tRNAs. In Mycobacterium avium (strain 104), this protein is Large ribosomal subunit protein uL16.